The following is a 306-amino-acid chain: Ribosomal protein L11 methyltransferase (306 aa).

Positions 154, 179, 201, and 242 each coordinate S-adenosyl-L-methionine.

This sequence belongs to the methyltransferase superfamily. PrmA family.

Its subcellular location is the cytoplasm. The catalysed reaction is L-lysyl-[protein] + 3 S-adenosyl-L-methionine = N(6),N(6),N(6)-trimethyl-L-lysyl-[protein] + 3 S-adenosyl-L-homocysteine + 3 H(+). Its function is as follows. Methylates ribosomal protein L11. The sequence is that of Ribosomal protein L11 methyltransferase from Stenotrophomonas maltophilia (strain K279a).